A 671-amino-acid polypeptide reads, in one-letter code: DNA ligase (671 aa).

Residues 32–36 (DVEYD), 81–82 (SL), and E114 each bind NAD(+). K116 (N6-AMP-lysine intermediate) is an active-site residue. Residues R137, E175, K292, and K316 each contribute to the NAD(+) site. Zn(2+)-binding residues include C410, C413, C428, and C434. In terms of domain architecture, BRCT spans 592-671 (EKNNYFSGKN…AEFYQILGIR (80 aa)).

It belongs to the NAD-dependent DNA ligase family. LigA subfamily. The cofactor is Mg(2+). It depends on Mn(2+) as a cofactor.

The enzyme catalyses NAD(+) + (deoxyribonucleotide)n-3'-hydroxyl + 5'-phospho-(deoxyribonucleotide)m = (deoxyribonucleotide)n+m + AMP + beta-nicotinamide D-nucleotide.. In terms of biological role, DNA ligase that catalyzes the formation of phosphodiester linkages between 5'-phosphoryl and 3'-hydroxyl groups in double-stranded DNA using NAD as a coenzyme and as the energy source for the reaction. It is essential for DNA replication and repair of damaged DNA. The sequence is that of DNA ligase from Baumannia cicadellinicola subsp. Homalodisca coagulata.